The chain runs to 268 residues: MSGPILIFDSGIGGLSILDEIRKVMPQQSCCYLFDNARLPYGELEESELISGCVSLIIEQAMRINAGIVVVACNSASTLVLTTLREQLSIPVVGVVPAIKPAAKISKRRHIGLLATPGTIKRPYTKQLIDAFAEDCRVELFGSSELVMLAEAKLAGTAVDMQKLELLLAPIRTSELDTLVLGCTHFPVLATEIKQSLGQSIILLDSGKAVADRVLSLLKGNGLPKTASNKVVDYSAVFTTDDIAQGLKKRLVEEGFTSIEPHSSTNLR.

Substrate contacts are provided by residues 9–10 (DS) and 41–42 (YG). C73 serves as the catalytic Proton donor/acceptor. 74–75 (NS) is a substrate binding site. Residue C183 is the Proton donor/acceptor of the active site. A substrate-binding site is contributed by 184–185 (TH).

This sequence belongs to the aspartate/glutamate racemases family.

The catalysed reaction is L-glutamate = D-glutamate. It participates in cell wall biogenesis; peptidoglycan biosynthesis. Provides the (R)-glutamate required for cell wall biosynthesis. In Shewanella piezotolerans (strain WP3 / JCM 13877), this protein is Glutamate racemase.